The sequence spans 690 residues: UvrABC system protein B (690 aa).

Residues 30–188 (QGVMDGQTNQ…QELISLHFVR (159 aa)) enclose the Helicase ATP-binding domain. 43–50 (GVTGSGKT) lines the ATP pocket. The Beta-hairpin motif lies at 96–119 (YYDFYQPEAYIPTMDKYIAKDLKI). The Helicase C-terminal domain maps to 435–601 (QIDDLLEEIR…SIVKSVDQVL (167 aa)). The UVR domain occupies 641–676 (YAMAEELRLEMQEAAESMEFEKAAYLRDEVTKLEDA).

The protein belongs to the UvrB family. Forms a heterotetramer with UvrA during the search for lesions. Interacts with UvrC in an incision complex.

It localises to the cytoplasm. The UvrABC repair system catalyzes the recognition and processing of DNA lesions. A damage recognition complex composed of 2 UvrA and 2 UvrB subunits scans DNA for abnormalities. Upon binding of the UvrA(2)B(2) complex to a putative damaged site, the DNA wraps around one UvrB monomer. DNA wrap is dependent on ATP binding by UvrB and probably causes local melting of the DNA helix, facilitating insertion of UvrB beta-hairpin between the DNA strands. Then UvrB probes one DNA strand for the presence of a lesion. If a lesion is found the UvrA subunits dissociate and the UvrB-DNA preincision complex is formed. This complex is subsequently bound by UvrC and the second UvrB is released. If no lesion is found, the DNA wraps around the other UvrB subunit that will check the other stand for damage. This is UvrABC system protein B from Chlorobium phaeobacteroides (strain BS1).